A 1109-amino-acid polypeptide reads, in one-letter code: MPKRTDLKSVLVIGSGPIVIGQAAEFDYSGTQALRVLKEEGLRVILVNSNPATIMTDPEFADATYIEPITPEVVEKIIAKERPDAVLPTLGGQTALNTAIALDKNGVLEKYNVELIGANIAAIELGEDREKFKGVVERCGAESARSHIIHTMDEALEAAKDLGYPMVVRPSFTMGGLGSGLAYNEDDLRRIVGQGLQYSPTSEVLLEESILGWKEYELEMMRDKNDNVVVVCSIENFDPVGVHTGDSITVAPALTLTDREYQKLRDVSIAVIREVGVDTGGCNIQFAIDPATGRVVVIEMNPRVSRSSALASKATGFAIAKIATKLSLGYTLDEIPNDITQKTPASFEPTLDYVVVKVPRFAFEKFPAADNTLTTTMKSVGEAMAMGRNFTEALQKALRSLEQKGSQLDFSSVPEYEVAELIEKAKRPTTDRLYQVQRALLGGATVEQLFEATKIDPWFLDQLELLNEVSREIRQAGALTTDMLQRAKRHGFSDEQIGALTHNSEAVVRGVRQALGIRPVYKTVDTCAAEFAAYTPYHYSAYDEEDEVALHSKPSILILGSGPNRIGQGIEFDYSCVHASMALRKAGYETVMVNCNPETVSTDYDVSTRLYFEPLTLEDVLEVIAAEERTGGVMGVFVQLGGQTPLKLAQQLADAGVPILGTSPEAIDLAEHRGAFSRVLDKAGLVSPKNGTAVSFEDAKKIADEIGYPVLVRPSYVLGGRGMEIVYDEPNLSRYIANATEITPDHPVLIDRFLEDAVEIDVDALFDGTDMYLGGIMEHIEEAGIHSGDSACVLPPITLGSNVVERVRTATRAIAEGVGVRGLINIQFALASDVLYVLEANPRASRTVPFVSKATGVQMAKAAALIGTGVTINQLRTAYKMLPETGDGSTLPLDAPVAVKEAVLPFSRFRTPEGKVVDSLLGPEMRSTGEVMGIDKHFDTAFAKSQAGANNALPTEGKVFVSVANRDKRSVIMGVKRLSDLGFEIVSTGGTADVLRRNGIAATPVRKVAEGSSAEGEGTIADLVVAGEIDMVFNTPSGGEARSDGYELRAAATSIGIPCITTVAEFNAAVQAIEAMRTYEWSVTSLQEHAAALGESQKAAAAKADLQHA.

The segment at 1-402 is carboxyphosphate synthetic domain; sequence MPKRTDLKSV…ALQKALRSLE (402 aa). 12 residues coordinate ATP: Arg-129, Arg-169, Gly-175, Gly-176, Glu-208, Ile-210, Glu-215, Gly-241, Val-242, His-243, Gln-285, and Glu-299. The ATP-grasp 1 domain maps to 133–328; that stretch reads KGVVERCGAE…IAKIATKLSL (196 aa). Residues Gln-285, Glu-299, and Asn-301 each coordinate Mg(2+). Residues Gln-285, Glu-299, and Asn-301 each coordinate Mn(2+). Residues 403–546 form an oligomerization domain region; that stretch reads QKGSQLDFSS…YHYSAYDEED (144 aa). The tract at residues 547–950 is carbamoyl phosphate synthetic domain; that stretch reads EVALHSKPSI…AFAKSQAGAN (404 aa). Positions 677-868 constitute an ATP-grasp 2 domain; that stretch reads SRVLDKAGLV…MAKAAALIGT (192 aa). ATP contacts are provided by Arg-713, Arg-752, Leu-754, Glu-759, Gly-784, Ile-785, His-786, Ser-787, Gln-827, and Glu-839. Residues Gln-827, Glu-839, and Asn-841 each contribute to the Mg(2+) site. Residues Gln-827, Glu-839, and Asn-841 each coordinate Mn(2+). Residues 951–1096 enclose the MGS-like domain; that stretch reads NALPTEGKVF…QEHAAALGES (146 aa). The allosteric domain stretch occupies residues 951–1109; that stretch reads NALPTEGKVF…AAAKADLQHA (159 aa).

The protein belongs to the CarB family. In terms of assembly, composed of two chains; the small (or glutamine) chain promotes the hydrolysis of glutamine to ammonia, which is used by the large (or ammonia) chain to synthesize carbamoyl phosphate. Tetramer of heterodimers (alpha,beta)4. Requires Mg(2+) as cofactor. Mn(2+) is required as a cofactor.

The enzyme catalyses hydrogencarbonate + L-glutamine + 2 ATP + H2O = carbamoyl phosphate + L-glutamate + 2 ADP + phosphate + 2 H(+). The catalysed reaction is hydrogencarbonate + NH4(+) + 2 ATP = carbamoyl phosphate + 2 ADP + phosphate + 2 H(+). The protein operates within amino-acid biosynthesis; L-arginine biosynthesis; carbamoyl phosphate from bicarbonate: step 1/1. It functions in the pathway pyrimidine metabolism; UMP biosynthesis via de novo pathway; (S)-dihydroorotate from bicarbonate: step 1/3. In terms of biological role, large subunit of the glutamine-dependent carbamoyl phosphate synthetase (CPSase). CPSase catalyzes the formation of carbamoyl phosphate from the ammonia moiety of glutamine, carbonate, and phosphate donated by ATP, constituting the first step of 2 biosynthetic pathways, one leading to arginine and/or urea and the other to pyrimidine nucleotides. The large subunit (synthetase) binds the substrates ammonia (free or transferred from glutamine from the small subunit), hydrogencarbonate and ATP and carries out an ATP-coupled ligase reaction, activating hydrogencarbonate by forming carboxy phosphate which reacts with ammonia to form carbamoyl phosphate. The polypeptide is Carbamoyl phosphate synthase large chain (Pseudarthrobacter chlorophenolicus (strain ATCC 700700 / DSM 12829 / CIP 107037 / JCM 12360 / KCTC 9906 / NCIMB 13794 / A6) (Arthrobacter chlorophenolicus)).